Reading from the N-terminus, the 181-residue chain is CDP-diacylglycerol--glycerol-3-phosphate 3-phosphatidyltransferase (181 aa).

4 helical membrane-spanning segments follow: residues 8–28 (PNYL…TFYI), 35–55 (MLGA…GYIA), 64–84 (FGKM…IIML), and 148–168 (IIYL…LTII).

Belongs to the CDP-alcohol phosphatidyltransferase class-I family.

It is found in the cell membrane. It carries out the reaction a CDP-1,2-diacyl-sn-glycerol + sn-glycerol 3-phosphate = a 1,2-diacyl-sn-glycero-3-phospho-(1'-sn-glycero-3'-phosphate) + CMP + H(+). Its pathway is phospholipid metabolism; phosphatidylglycerol biosynthesis; phosphatidylglycerol from CDP-diacylglycerol: step 1/2. Its function is as follows. This protein catalyzes the committed step to the synthesis of the acidic phospholipids. The sequence is that of CDP-diacylglycerol--glycerol-3-phosphate 3-phosphatidyltransferase (pgsA) from Rickettsia bellii (strain RML369-C).